The primary structure comprises 551 residues: Palatinase (551 aa).

The active-site Nucleophile is D201. The active-site Proton donor is E243.

This sequence belongs to the glycosyl hydrolase 13 family.

It catalyses the reaction 6-O-alpha-D-glucopyranosyl-D-fructose + H2O = alpha-D-glucose + D-fructose. It participates in glycan degradation; palatinose degradation. Catalyzes the hydrolysis of palatinose. Shows a strict specificity toward palatinose, and cannot release glucose from the disaccharides sucrose, maltose, trehalose and melibiose. Involved in the degradation of palatinose, a sucrose isomer that is formed as a reserve material under conditions of excess carbon availability, sequestered in a form unavailable to competitors such as fungi or the host plant, and whose consumption appears to be postponed until the preferentially metabolized carbon source (e.g. sucrose) is depleted. The polypeptide is Palatinase (Erwinia rhapontici (Pectobacterium rhapontici)).